Here is a 128-residue protein sequence, read N- to C-terminus: Small ribosomal subunit protein uS8c (128 aa).

It belongs to the universal ribosomal protein uS8 family. Part of the 30S ribosomal subunit.

The protein localises to the plastid. It localises to the chloroplast. Its function is as follows. One of the primary rRNA binding proteins, it binds directly to 16S rRNA central domain where it helps coordinate assembly of the platform of the 30S subunit. This Gnetum parvifolium (Small-leaved jointfir) protein is Small ribosomal subunit protein uS8c (rps8).